The sequence spans 360 residues: uncharacterized protein (360 aa).

This is an uncharacterized protein from Escherichia coli (strain UTI89 / UPEC).